The primary structure comprises 272 residues: NAD kinase (272 aa).

The Proton acceptor role is filled by aspartate 62. Residues 62–63, arginine 67, 129–130, arginine 140, lysine 157, aspartate 159, isoleucine 167, 170–175, alanine 194, and glutamine 229 contribute to the NAD(+) site; these read DG, NE, and SSYSSS.

This sequence belongs to the NAD kinase family. A divalent metal cation serves as cofactor.

It is found in the cytoplasm. The enzyme catalyses NAD(+) + ATP = ADP + NADP(+) + H(+). Its function is as follows. Involved in the regulation of the intracellular balance of NAD and NADP, and is a key enzyme in the biosynthesis of NADP. Catalyzes specifically the phosphorylation on 2'-hydroxyl of the adenosine moiety of NAD to yield NADP. This Thermoplasma acidophilum (strain ATCC 25905 / DSM 1728 / JCM 9062 / NBRC 15155 / AMRC-C165) protein is NAD kinase.